The sequence spans 43 residues: Parvalbumin beta (43 aa).

EF-hand domains follow at residues 1–20 and 22–43; these read KVFE…LKLF and LSSA…ALVK. Residues aspartate 7, aspartate 9, serine 11, phenylalanine 12, glutamate 14, glutamate 16, and glutamate 37 each coordinate Ca(2+).

As to expression, detected in muscle and cutaneous mucus. In the skin, detected in cells in the basal region of the glandular epithelium of the dermal mucus glands (at protein level).

The protein localises to the cytoplasm. It is found in the secreted. In muscle, parvalbumin is thought to be involved in relaxation after contraction. It binds two calcium ions. The sequence is that of Parvalbumin beta from Rana temporaria (European common frog).